We begin with the raw amino-acid sequence, 142 residues long: Transcriptional regulator MraZ (142 aa).

2 SpoVT-AbrB domains span residues alanine 5 to glutamate 51 and alanine 77 to threonine 120.

Belongs to the MraZ family. In terms of assembly, forms oligomers.

It localises to the cytoplasm. Its subcellular location is the nucleoid. The protein is Transcriptional regulator MraZ of Burkholderia cenocepacia (strain ATCC BAA-245 / DSM 16553 / LMG 16656 / NCTC 13227 / J2315 / CF5610) (Burkholderia cepacia (strain J2315)).